Here is a 352-residue protein sequence, read N- to C-terminus: MATQEEKQKALDAALGQIEKQFGKGAIMKLGDSQKLDIEAISTGSFGLDLALGIGGLPMGRIVEIFGPESSGKTTLTLSVIAEAQKTGKTCAFIDAEHALDPIYASKLGVDVKEPLVSQPDNGEQALEICDALVRSGAVDVIIVDSVAALTPKAEIEGDMGDSHMGLQARLMSQALRKLTSQIKNANCLVIFINQIRMKIGVMFGNPETTTGGNALKFYASVRLDIRRVGSIKEGDEVIGNETRVKVVKNKVAPPFRQVDFQILYGEGISKESELIELGVKHKLISKAGAWYAYQNEKIGQGKTNAMKWLKDNPEQAKFIESTLRDELLAHPESAITAEVEDEAGNGEGDFE.

67-74 lines the ATP pocket; sequence GPESSGKT.

This sequence belongs to the RecA family.

Its subcellular location is the cytoplasm. Functionally, can catalyze the hydrolysis of ATP in the presence of single-stranded DNA, the ATP-dependent uptake of single-stranded DNA by duplex DNA, and the ATP-dependent hybridization of homologous single-stranded DNAs. It interacts with LexA causing its activation and leading to its autocatalytic cleavage. In Aggregatibacter actinomycetemcomitans (Actinobacillus actinomycetemcomitans), this protein is Protein RecA.